The sequence spans 1220 residues: Post-transcriptional regulator MKT1L (1220 aa).

Residues 1–107 (MRKAGANRNN…SPWNSPPQQT (107 aa)) are disordered. Positions 34 to 70 (PHHHQHQHHHQHQHQHQHQHQHPHQHPHQHHHHHPHH) are enriched in basic residues.

The protein belongs to the XPG/RAD2 endonuclease family. As to quaternary structure, forms a complex composed of at least MKT1L, PBP1, XAC1 and LSM12.

It localises to the cytoplasm. Involved in post-transcriptional regulation of gene expression. The polypeptide is Post-transcriptional regulator MKT1L (Trypanosoma brucei brucei (strain 927/4 GUTat10.1)).